Reading from the N-terminus, the 215-residue chain is Small ribosomal subunit protein eS1 (215 aa).

The interval 195–215 (SGMQEPQKNEPAPGGEAIAQN) is disordered.

This sequence belongs to the eukaryotic ribosomal protein eS1 family.

This Thermoplasma acidophilum (strain ATCC 25905 / DSM 1728 / JCM 9062 / NBRC 15155 / AMRC-C165) protein is Small ribosomal subunit protein eS1.